Consider the following 156-residue polypeptide: Mediator of RNA polymerase II transcription subunit 28 (156 aa).

The disordered stretch occupies residues 1-38 (MDYQQKPPQSSDPSPSPPDRPPGIRSPETPSNNQNNDI). The stretch at 104 to 156 (PSRAESLKKDIAVMEEELKTKDELIKKHMRLFQESQKLVKEQIEKHRDELEKV) forms a coiled coil.

This sequence belongs to the Mediator complex subunit 28 family. In terms of assembly, dimers. Component of the Mediator complex. Interacts with GEBPL.

The protein resides in the nucleus. In terms of biological role, component of the Mediator complex, a coactivator involved in the regulated transcription of nearly all RNA polymerase II-dependent genes. Mediator functions as a bridge to convey information from gene-specific regulatory proteins to the basal RNA polymerase II transcription machinery. The Mediator complex, having a compact conformation in its free form, is recruited to promoters by direct interactions with regulatory proteins and serves for the assembly of a functional pre-initiation complex with RNA polymerase II and the general transcription factors. This is Mediator of RNA polymerase II transcription subunit 28 from Arabidopsis thaliana (Mouse-ear cress).